A 339-amino-acid polypeptide reads, in one-letter code: Glucokinase (339 aa).

Gly16–Thr21 is a binding site for ATP.

This sequence belongs to the bacterial glucokinase family.

Its subcellular location is the cytoplasm. It carries out the reaction D-glucose + ATP = D-glucose 6-phosphate + ADP + H(+). This is Glucokinase from Sinorhizobium fredii (strain NBRC 101917 / NGR234).